Here is a 208-residue protein sequence, read N- to C-terminus: Uracil phosphoribosyltransferase (208 aa).

Residues R78, R103, and 130-138 (DPMLATANS) each bind 5-phospho-alpha-D-ribose 1-diphosphate. Uracil contacts are provided by residues I193 and 198–200 (GDA). D199 contributes to the 5-phospho-alpha-D-ribose 1-diphosphate binding site.

Belongs to the UPRTase family. Mg(2+) serves as cofactor.

The catalysed reaction is UMP + diphosphate = 5-phospho-alpha-D-ribose 1-diphosphate + uracil. It functions in the pathway pyrimidine metabolism; UMP biosynthesis via salvage pathway; UMP from uracil: step 1/1. Allosterically activated by GTP. Catalyzes the conversion of uracil and 5-phospho-alpha-D-ribose 1-diphosphate (PRPP) to UMP and diphosphate. This Brucella abortus biovar 1 (strain 9-941) protein is Uracil phosphoribosyltransferase.